Here is a 213-residue protein sequence, read N- to C-terminus: Kynurenine formamidase (213 aa).

W18 lines the substrate pocket. 3 residues coordinate Zn(2+): H48, H52, and D54. The active-site Proton donor/acceptor is H58. Zn(2+) contacts are provided by H160 and E172.

The protein belongs to the Cyclase 1 superfamily. KynB family. In terms of assembly, homodimer. Zn(2+) is required as a cofactor.

It catalyses the reaction N-formyl-L-kynurenine + H2O = L-kynurenine + formate + H(+). Its pathway is amino-acid degradation; L-tryptophan degradation via kynurenine pathway; L-kynurenine from L-tryptophan: step 2/2. Catalyzes the hydrolysis of N-formyl-L-kynurenine to L-kynurenine, the second step in the kynurenine pathway of tryptophan degradation. The chain is Kynurenine formamidase from Burkholderia pseudomallei (strain 1106a).